The sequence spans 339 residues: MDSTSSLHGSSLHRPSTEQTRTDFSWDGINLSMEDTTSILPKLKRNSNAYGIGALAKSSFSGISRSMKDHVTKPTAMGQGRVAHMIEWQGWGKTPAIQPQHSHEAVRRDTDAYSDLSDGEKEARFLAGVMEQFAISEATLMAWSSMDGEDMSVNSTQETLGCNYSDNYQELMESQDALAQAPMDGWPHSYVSQGMYCLGSSDAWEASDQSLIASPATGSYLGPAFGDSQPSLHEMGPSQPASGYSAQEPSSLLGGDTDWAPGVGGVDLAGGPAEEEKRKKMRGAGTWSPSPHARTPRCPPLSAGRCLTSHPQACSPLMRRKARPTTSFLPLLTQPSTPA.

The segment at 1–22 is disordered; that stretch reads MDSTSSLHGSSLHRPSTEQTRT. Phosphoserine occurs at positions 47, 114, and 117. The segment at 222–339 is disordered; the sequence is GPAFGDSQPS…PLLTQPSTPA (118 aa). 2 stretches are compositionally biased toward polar residues: residues 239-250 and 324-339; these read QPASGYSAQEPS and PTTS…STPA. Threonine 325 carries the post-translational modification Phosphothreonine. Residue serine 327 is modified to Phosphoserine.

The protein belongs to the FAM131 family.

In Bos taurus (Bovine), this protein is Protein FAM131B (FAM131B).